Reading from the N-terminus, the 114-residue chain is Phosphoribosyl-AMP cyclohydrolase (114 aa).

Residue Asp-80 participates in Mg(2+) binding. Cys-81 provides a ligand contact to Zn(2+). The Mg(2+) site is built by Asp-82 and Asp-84. Zn(2+) contacts are provided by Cys-97 and Cys-104.

The protein belongs to the PRA-CH family. Homodimer. Mg(2+) serves as cofactor. Requires Zn(2+) as cofactor.

It is found in the cytoplasm. The enzyme catalyses 1-(5-phospho-beta-D-ribosyl)-5'-AMP + H2O = 1-(5-phospho-beta-D-ribosyl)-5-[(5-phospho-beta-D-ribosylamino)methylideneamino]imidazole-4-carboxamide. Its pathway is amino-acid biosynthesis; L-histidine biosynthesis; L-histidine from 5-phospho-alpha-D-ribose 1-diphosphate: step 3/9. Its function is as follows. Catalyzes the hydrolysis of the adenine ring of phosphoribosyl-AMP. The sequence is that of Phosphoribosyl-AMP cyclohydrolase from Rhodococcus jostii (strain RHA1).